The chain runs to 223 residues: MEDCLIEDQTSFYSEAEHYWKDVPPTVDGMLGGYGSISSIDINGSKKFLQKFLGEGQGKTGTGCALDCGAGIGRITKRLLLPLFRTVDLVDVTQEFLDKARTYLGEESKRVENYFCCGLQDFQPQPERYDVIWIQWVIGHLTDDHLVEFLRRCRSGLRPEGLIVVKDNVAYEGVIPDDVDSSVCRDLNVLHRLVARAGLSIIYEEQQQNFPEEIYQVHALALR.

Residues glycine 69, arginine 74, 91 to 93 (DVT), 119 to 120 (LQ), and glutamine 135 each bind S-adenosyl-L-methionine.

This sequence belongs to the methyltransferase superfamily. NTM1 family.

Its subcellular location is the nucleus. The enzyme catalyses N-terminal L-alanyl-L-prolyl-L-lysyl-[protein] + 3 S-adenosyl-L-methionine = N-terminal N,N,N-trimethyl-L-alanyl-L-prolyl-L-lysyl-[protein] + 3 S-adenosyl-L-homocysteine + 3 H(+). The catalysed reaction is N-terminal L-seryl-L-prolyl-L-lysyl-[protein] + 3 S-adenosyl-L-methionine = N-terminal N,N,N-trimethyl-L-seryl-L-prolyl-L-lysyl-[protein] + 3 S-adenosyl-L-homocysteine + 3 H(+). It carries out the reaction N-terminal L-prolyl-L-prolyl-L-lysyl-[protein] + 2 S-adenosyl-L-methionine = N-terminal N,N-dimethyl-L-prolyl-L-prolyl-L-lysyl-[protein] + 2 S-adenosyl-L-homocysteine + 2 H(+). Its function is as follows. Distributive alpha-N-methyltransferase that methylates the N-terminus of target proteins containing the N-terminal motif [Ala/Gly/Pro/Ser]-Pro-Lys when the initiator Met is cleaved. Specifically catalyzes mono-, di- or tri-methylation of the exposed alpha-amino group of the Ala, Gly or Ser residue in the [Ala/Gly/Ser]-Pro-Lys motif and mono- or di-methylation of Pro in the Pro-Pro-Lys motif. Required during mitosis for normal bipolar spindle formation and chromosome segregation via its action on target proteins. The protein is N-terminal Xaa-Pro-Lys N-methyltransferase 1 (ntmt1) of Danio rerio (Zebrafish).